The chain runs to 477 residues: Inner membrane protein YbhI (477 aa).

Residues Met1–Ser5 are Cytoplasmic-facing. The chain crosses the membrane as a helical span at residues Leu6–Ala26. A topological domain (periplasmic) is located at residue Gly27. The helical transmembrane segment at Leu28–Ile48 threads the bilayer. Residues Lys49–Pro50 are Cytoplasmic-facing. Residues Phe51 to Leu71 form a helical membrane-spanning segment. The Periplasmic segment spans residues Ser72–Ser87. The chain crosses the membrane as a helical span at residues Gly88 to Leu108. Topologically, residues Gly109–Arg148 are cytoplasmic. The helical transmembrane segment at Ala149–Glu169 threads the bilayer. Residues Lys170–Gly219 lie on the Periplasmic side of the membrane. Residues Gly220–Ile240 traverse the membrane as a helical segment. Residues Tyr241–Lys272 are Cytoplasmic-facing. A helical transmembrane segment spans residues Met273–Val293. Residues Asp294 to Thr297 are Periplasmic-facing. The helical transmembrane segment at Val298 to Val318 threads the bilayer. The Cytoplasmic portion of the chain corresponds to Lys319–Asn356. The helical transmembrane segment at Leu357 to Val377 threads the bilayer. Residue Arg378 is a topological domain, periplasmic. A helical membrane pass occupies residues Tyr379–Ala399. The Cytoplasmic segment spans residues Asn400–Trp445. A helical membrane pass occupies residues Trp446–Trp466. The Periplasmic portion of the chain corresponds to Trp467–Leu477.

The protein belongs to the SLC13A/DASS transporter (TC 2.A.47) family. DIT1 subfamily.

Its subcellular location is the cell inner membrane. This Escherichia coli (strain K12) protein is Inner membrane protein YbhI (ybhI).